The following is a 153-amino-acid chain: Spanin, inner membrane subunit (153 aa).

Over 1-3 (MNR) the chain is Cytoplasmic. Residues 4–24 (VTAIISALVICIIVCLSWAVN) form a helical; Signal-anchor for type II membrane protein membrane-spanning segment. The Periplasmic portion of the chain corresponds to 25 to 153 (HYRDNAITYK…TQKYINEQCR (129 aa)). Residues 65 to 92 (DAKYTKELADAKAENDALRDDVAAGRRR) are a coiled coil.

The protein belongs to the Lambdavirus i-spanin family. Homodimer; disulfide-linked. Interacts (via C-terminus) with the spanin outer lipoprotein subunit (via C-terminus). Part of the spanin complex which spans the entire periplasmic space. The spanin complex is composed of one homodimer of the i-spanin linked by intermolecular disulfide bonds involving two Cys residues and one homodimer of the o-spanin covalently linked by an intermolecular disulfide bond involving one Cys.

The protein localises to the host cell inner membrane. Component of the spanin complex that disrupts the host outer membrane and participates in cell lysis during virus exit. The spanin complex conducts the final step in host lysis by disrupting the outer membrane after holin and endolysin have permeabilized the inner membrane and degraded the host peptidoglycans. Host outer membrane disruption is due to local fusion between the inner and outer membrane performed by the spanin complex. The protein is Spanin, inner membrane subunit (Rz) of Escherichia coli (Bacteriophage 21).